Consider the following 493-residue polypeptide: Mitochondrial distribution and morphology protein 10 (493 aa).

This sequence belongs to the MDM10 family. As to quaternary structure, component of the ER-mitochondria encounter structure (ERMES) or MDM complex, composed of MMM1, MDM10, MDM12 and MDM34. Associates with the mitochondrial outer membrane sorting assembly machinery SAM(core) complex, which consists of SAM35, SAM37 and SAM50, to form a SAM(holo) complex.

The protein resides in the mitochondrion outer membrane. Functionally, component of the ERMES/MDM complex, which serves as a molecular tether to connect the endoplasmic reticulum and mitochondria. Components of this complex are involved in the control of mitochondrial shape and protein biogenesis and may function in phospholipid exchange. MDM10 is involved in the late assembly steps of the general translocase of the mitochondrial outer membrane (TOM complex). Functions in the TOM40-specific route of the assembly of outer membrane beta-barrel proteins, including the association of TOM40 with the receptor TOM22 and small TOM proteins. Can associate with the SAM(core) complex as well as the MDM12-MMM1 complex, both involved in late steps of the major beta-barrel assembly pathway, that is responsible for biogenesis of all outer membrane beta-barrel proteins. May act as a switch that shuttles between both complexes and channels precursor proteins into the TOM40-specific pathway. Plays a role in mitochondrial morphology and in the inheritance of mitochondria. This Saccharomyces cerevisiae (strain YJM789) (Baker's yeast) protein is Mitochondrial distribution and morphology protein 10.